The primary structure comprises 528 residues: Probable histone-arginine methyltransferase CARM1 (528 aa).

One can recognise an SAM-dependent MTase PRMT-type domain in the interval 149–464 (EASSAKMYFH…QSYTIYLTMS (316 aa)). Residues Gln-166, Arg-175, Gly-199, Glu-221, Glu-251, and Ser-279 each contribute to the S-adenosyl-L-methionine site. The span at 500 to 520 (YVMQQDQQQQQLPSLQPQSPL) shows a compositional bias: low complexity. Residues 500–528 (YVMQQDQQQQQLPSLQPQSPLWDYHYGQD) are disordered.

It belongs to the class I-like SAM-binding methyltransferase superfamily. Protein arginine N-methyltransferase family.

The protein resides in the nucleus. It localises to the cytoplasm. The catalysed reaction is L-arginyl-[protein] + 2 S-adenosyl-L-methionine = N(omega),N(omega)-dimethyl-L-arginyl-[protein] + 2 S-adenosyl-L-homocysteine + 2 H(+). Functionally, methylates (mono- and asymmetric dimethylation) the guanidino nitrogens of arginyl residues in several proteins involved in DNA packaging, transcription regulation, and mRNA stability. Recruited to promoters upon gene activation, methylates histone H3 and activates transcription via chromatin remodeling. The chain is Probable histone-arginine methyltransferase CARM1 (CARM1) from Oryza sativa subsp. indica (Rice).